The primary structure comprises 503 residues: Glycerol kinase (503 aa).

An ADP-binding site is contributed by Thr-14. Residues Thr-14, Thr-15, and Ser-16 each contribute to the ATP site. Residue Thr-14 coordinates sn-glycerol 3-phosphate. An ADP-binding site is contributed by Arg-18. Arg-84, Glu-85, Tyr-136, and Asp-246 together coordinate sn-glycerol 3-phosphate. Residues Arg-84, Glu-85, Tyr-136, Asp-246, and Gln-247 each contribute to the glycerol site. 2 residues coordinate ADP: Thr-268 and Gly-311. Positions 268, 311, 315, and 412 each coordinate ATP. ADP contacts are provided by Gly-412 and Asn-416.

Belongs to the FGGY kinase family.

It catalyses the reaction glycerol + ATP = sn-glycerol 3-phosphate + ADP + H(+). It functions in the pathway polyol metabolism; glycerol degradation via glycerol kinase pathway; sn-glycerol 3-phosphate from glycerol: step 1/1. Inhibited by fructose 1,6-bisphosphate (FBP). In terms of biological role, key enzyme in the regulation of glycerol uptake and metabolism. Catalyzes the phosphorylation of glycerol to yield sn-glycerol 3-phosphate. In Haemophilus influenzae (strain PittEE), this protein is Glycerol kinase.